The chain runs to 345 residues: Holliday junction branch migration complex subunit RuvB (345 aa).

A large ATPase domain (RuvB-L) region spans residues 4–194 (TDKLFGAAPE…FGIVARLEFY (191 aa)). Residues Leu33, Arg34, Gly75, Lys78, Thr79, Thr80, 141–143 (EDY), Arg184, Tyr194, and Arg231 each bind ATP. Position 79 (Thr79) interacts with Mg(2+). Residues 195–265 (NAEELTRIVS…VADAALAMLD (71 aa)) form a small ATPAse domain (RuvB-S) region. Residues 268–345 (PAGLDVMDRK…LHFGLPVKDA (78 aa)) form a head domain (RuvB-H) region. Residues Arg323 and Arg328 each coordinate DNA.

The protein belongs to the RuvB family. In terms of assembly, homohexamer. Forms an RuvA(8)-RuvB(12)-Holliday junction (HJ) complex. HJ DNA is sandwiched between 2 RuvA tetramers; dsDNA enters through RuvA and exits via RuvB. An RuvB hexamer assembles on each DNA strand where it exits the tetramer. Each RuvB hexamer is contacted by two RuvA subunits (via domain III) on 2 adjacent RuvB subunits; this complex drives branch migration. In the full resolvosome a probable DNA-RuvA(4)-RuvB(12)-RuvC(2) complex forms which resolves the HJ.

The protein localises to the cytoplasm. It catalyses the reaction ATP + H2O = ADP + phosphate + H(+). Functionally, the RuvA-RuvB-RuvC complex processes Holliday junction (HJ) DNA during genetic recombination and DNA repair, while the RuvA-RuvB complex plays an important role in the rescue of blocked DNA replication forks via replication fork reversal (RFR). RuvA specifically binds to HJ cruciform DNA, conferring on it an open structure. The RuvB hexamer acts as an ATP-dependent pump, pulling dsDNA into and through the RuvAB complex. RuvB forms 2 homohexamers on either side of HJ DNA bound by 1 or 2 RuvA tetramers; 4 subunits per hexamer contact DNA at a time. Coordinated motions by a converter formed by DNA-disengaged RuvB subunits stimulates ATP hydrolysis and nucleotide exchange. Immobilization of the converter enables RuvB to convert the ATP-contained energy into a lever motion, pulling 2 nucleotides of DNA out of the RuvA tetramer per ATP hydrolyzed, thus driving DNA branch migration. The RuvB motors rotate together with the DNA substrate, which together with the progressing nucleotide cycle form the mechanistic basis for DNA recombination by continuous HJ branch migration. Branch migration allows RuvC to scan DNA until it finds its consensus sequence, where it cleaves and resolves cruciform DNA. The sequence is that of Holliday junction branch migration complex subunit RuvB from Chromobacterium violaceum (strain ATCC 12472 / DSM 30191 / JCM 1249 / CCUG 213 / NBRC 12614 / NCIMB 9131 / NCTC 9757 / MK).